The sequence spans 293 residues: Cytidine deaminase 6 (293 aa).

CMP/dCMP-type deaminase domains are found at residues 16–147 (RGPS…FGPD) and 178–293 (EDCS…TNKN). Position 57–59 (57–59 (NVE)) interacts with substrate. H70 contacts Zn(2+). The active-site Proton donor is the E72. Residues C103 and C106 each contribute to the Zn(2+) site.

This sequence belongs to the cytidine and deoxycytidylate deaminase family. As to quaternary structure, homodimer. The cofactor is Zn(2+).

The catalysed reaction is cytidine + H2O + H(+) = uridine + NH4(+). The enzyme catalyses 2'-deoxycytidine + H2O + H(+) = 2'-deoxyuridine + NH4(+). In terms of biological role, this enzyme scavenges exogenous and endogenous cytidine and 2'-deoxycytidine for UMP synthesis. This is Cytidine deaminase 6 (CDA6) from Arabidopsis thaliana (Mouse-ear cress).